Reading from the N-terminus, the 486-residue chain is Histidine--tRNA ligase, chloroplastic/mitochondrial (486 aa).

It belongs to the class-II aminoacyl-tRNA synthetase family.

The protein resides in the plastid. Its subcellular location is the chloroplast. It localises to the mitochondrion. It catalyses the reaction tRNA(His) + L-histidine + ATP = L-histidyl-tRNA(His) + AMP + diphosphate + H(+). This Arabidopsis thaliana (Mouse-ear cress) protein is Histidine--tRNA ligase, chloroplastic/mitochondrial.